The sequence spans 654 residues: Glutamyl-tRNA(Gln) amidotransferase subunit B, mitochondrial (654 aa).

A mitochondrion-targeting transit peptide spans 1–8 (MGRIPTRE). The interval 79–101 (DQAKASKAQAKGKKKRSSADNQT) is disordered.

Belongs to the GatB/GatE family. GatB subfamily. As to quaternary structure, subunit of the heterotrimeric GatCAB amidotransferase (AdT) complex, composed of A, B and C subunits.

It localises to the mitochondrion. The enzyme catalyses L-glutamyl-tRNA(Gln) + L-glutamine + ATP + H2O = L-glutaminyl-tRNA(Gln) + L-glutamate + ADP + phosphate + H(+). In terms of biological role, allows the formation of correctly charged Gln-tRNA(Gln) through the transamidation of misacylated Glu-tRNA(Gln) in the mitochondria. The reaction takes place in the presence of glutamine and ATP through an activated gamma-phospho-Glu-tRNA(Gln). In Pyricularia oryzae (strain 70-15 / ATCC MYA-4617 / FGSC 8958) (Rice blast fungus), this protein is Glutamyl-tRNA(Gln) amidotransferase subunit B, mitochondrial.